We begin with the raw amino-acid sequence, 337 residues long: Heme A synthase (337 aa).

A run of 5 helical transmembrane segments spans residues 6–26 (ITKW…IGGI), 87–107 (FIHR…LIYF), 119–139 (LPYI…WYMV), 154–174 (LAFH…QLIK), and 192–212 (LIFS…GALV). Histidine 256 contacts heme. 3 helical membrane passes run 258-278 (LGGY…LKIE), 285-305 (IAYF…ITLL), and 308-328 (VPII…SIII). Position 316 (histidine 316) interacts with heme.

This sequence belongs to the COX15/CtaA family. Type 2 subfamily. As to quaternary structure, interacts with CtaB. Heme b serves as cofactor.

Its subcellular location is the cell membrane. It carries out the reaction Fe(II)-heme o + 2 A + H2O = Fe(II)-heme a + 2 AH2. It participates in porphyrin-containing compound metabolism; heme A biosynthesis; heme A from heme O: step 1/1. Functionally, catalyzes the conversion of heme O to heme A by two successive hydroxylations of the methyl group at C8. The first hydroxylation forms heme I, the second hydroxylation results in an unstable dihydroxymethyl group, which spontaneously dehydrates, resulting in the formyl group of heme A. The polypeptide is Heme A synthase (Rickettsia massiliae (strain Mtu5)).